Reading from the N-terminus, the 269-residue chain is NAD kinase (269 aa).

The active-site Proton acceptor is Asp45. Residues 45-46 (DG), 122-123 (NE), Arg149, Asp151, and Ala186 contribute to the NAD(+) site.

It belongs to the NAD kinase family. It depends on a divalent metal cation as a cofactor.

The protein resides in the cytoplasm. It catalyses the reaction NAD(+) + ATP = ADP + NADP(+) + H(+). Its function is as follows. Involved in the regulation of the intracellular balance of NAD and NADP, and is a key enzyme in the biosynthesis of NADP. Catalyzes specifically the phosphorylation on 2'-hydroxyl of the adenosine moiety of NAD to yield NADP. The chain is NAD kinase from Staphylococcus epidermidis (strain ATCC 35984 / DSM 28319 / BCRC 17069 / CCUG 31568 / BM 3577 / RP62A).